Consider the following 342-residue polypeptide: 4-hydroxythreonine-4-phosphate dehydrogenase (342 aa).

Positions 140 and 141 each coordinate substrate. A divalent metal cation contacts are provided by His175, His220, and His275. Lys283, Asn292, and Arg301 together coordinate substrate.

The protein belongs to the PdxA family. Homodimer. Zn(2+) is required as a cofactor. It depends on Mg(2+) as a cofactor. Requires Co(2+) as cofactor.

Its subcellular location is the cytoplasm. The enzyme catalyses 4-(phosphooxy)-L-threonine + NAD(+) = 3-amino-2-oxopropyl phosphate + CO2 + NADH. It participates in cofactor biosynthesis; pyridoxine 5'-phosphate biosynthesis; pyridoxine 5'-phosphate from D-erythrose 4-phosphate: step 4/5. In terms of biological role, catalyzes the NAD(P)-dependent oxidation of 4-(phosphooxy)-L-threonine (HTP) into 2-amino-3-oxo-4-(phosphooxy)butyric acid which spontaneously decarboxylates to form 3-amino-2-oxopropyl phosphate (AHAP). This chain is 4-hydroxythreonine-4-phosphate dehydrogenase, found in Rhizobium meliloti (strain 1021) (Ensifer meliloti).